The chain runs to 327 residues: MQFIDQANIILKAGKGGNGIVSFRREKFVPAGGPSGGNGGKGGSIILVADNNLQTLLDFKFNREIFAKDGFKGGPNKRSGASGENTILKVPCGTEVRDVHTGIILGDLTIDKQSLTIAHGGRGGHGNAYYLSNQNRAPESFTEGQEGEIWEVQLELKLLAEVGIIGLPNAGKSTLISVLSSARPKIANYPFTTLIPNLGVVRKADGNGCLFADIPGLISGAAEGVGLGHDFLRHIQRTKILIHVIDSIAENPIHDFEIIEKELKQYGNGLLEKERIIVLNKKELIDENYLKIIIKKLENLSKKKVLVISSALREGLPSLLSEVWNRI.

Positions Met-1–Leu-159 constitute an Obg domain. The 168-residue stretch at Ala-160–Ile-327 folds into the OBG-type G domain. Residues Gly-166–Ser-173, Phe-191–Ile-195, Asp-213–Gly-216, Asn-280–Glu-283, and Ser-309–Ala-311 contribute to the ATP site. Mg(2+) is bound by residues Ser-173 and Thr-193.

It belongs to the TRAFAC class OBG-HflX-like GTPase superfamily. OBG GTPase family. In terms of assembly, monomer. It depends on Mg(2+) as a cofactor.

Its subcellular location is the cytoplasm. An essential GTPase which binds GTP, GDP and possibly (p)ppGpp with moderate affinity, with high nucleotide exchange rates and a fairly low GTP hydrolysis rate. Plays a role in control of the cell cycle, stress response, ribosome biogenesis and in those bacteria that undergo differentiation, in morphogenesis control. This is GTPase Obg from Prochlorococcus marinus (strain MIT 9515).